A 288-amino-acid polypeptide reads, in one-letter code: ATP synthase gamma chain (288 aa).

Belongs to the ATPase gamma chain family. In terms of assembly, F-type ATPases have 2 components, CF(1) - the catalytic core - and CF(0) - the membrane proton channel. CF(1) has five subunits: alpha(3), beta(3), gamma(1), delta(1), epsilon(1). CF(0) has three main subunits: a, b and c.

Its subcellular location is the cell inner membrane. In terms of biological role, produces ATP from ADP in the presence of a proton gradient across the membrane. The gamma chain is believed to be important in regulating ATPase activity and the flow of protons through the CF(0) complex. The chain is ATP synthase gamma chain from Rickettsia akari (strain Hartford).